The chain runs to 94 residues: Integration host factor subunit beta (94 aa).

The protein belongs to the bacterial histone-like protein family. In terms of assembly, heterodimer of an alpha and a beta chain.

This protein is one of the two subunits of integration host factor, a specific DNA-binding protein that functions in genetic recombination as well as in transcriptional and translational control. The chain is Integration host factor subunit beta from Pectobacterium atrosepticum (strain SCRI 1043 / ATCC BAA-672) (Erwinia carotovora subsp. atroseptica).